A 222-amino-acid chain; its full sequence is Ribulose-phosphate 3-epimerase (222 aa).

Serine 7 contacts substrate. Histidine 32, aspartate 34, and histidine 65 together coordinate a divalent metal cation. The active-site Proton acceptor is aspartate 34. Substrate contacts are provided by residues histidine 65, 141-144 (GFSG), 174-176 (DGG), and 196-197 (GS). Position 174 (aspartate 174) interacts with a divalent metal cation. The active-site Proton donor is the aspartate 174.

This sequence belongs to the ribulose-phosphate 3-epimerase family. A divalent metal cation serves as cofactor.

The enzyme catalyses D-ribulose 5-phosphate = D-xylulose 5-phosphate. It functions in the pathway carbohydrate degradation. Functionally, catalyzes the reversible epimerization of D-ribulose 5-phosphate to D-xylulose 5-phosphate. The sequence is that of Ribulose-phosphate 3-epimerase from Aquifex aeolicus (strain VF5).